The following is a 394-amino-acid chain: Phosphopentomutase (394 aa).

Mn(2+) is bound by residues D10, D282, H287, D323, H324, and H335.

The protein belongs to the phosphopentomutase family. It depends on Mn(2+) as a cofactor.

Its subcellular location is the cytoplasm. It catalyses the reaction 2-deoxy-alpha-D-ribose 1-phosphate = 2-deoxy-D-ribose 5-phosphate. The catalysed reaction is alpha-D-ribose 1-phosphate = D-ribose 5-phosphate. The protein operates within carbohydrate degradation; 2-deoxy-D-ribose 1-phosphate degradation; D-glyceraldehyde 3-phosphate and acetaldehyde from 2-deoxy-alpha-D-ribose 1-phosphate: step 1/2. Isomerase that catalyzes the conversion of deoxy-ribose 1-phosphate (dRib-1-P) and ribose 1-phosphate (Rib-1-P) to deoxy-ribose 5-phosphate (dRib-5-P) and ribose 5-phosphate (Rib-5-P), respectively. In Dictyoglomus turgidum (strain DSM 6724 / Z-1310), this protein is Phosphopentomutase.